The sequence spans 360 residues: MRVFNFSAGPAAMPEEVLRQAADEMLDWGGSGMSVMEMSHRGKEFMTIHEEALTDLRELLQVPSSHHILFLQGGGLGENAIVPMNLMGRKARADFVVTGSWSQKSFKEAQKYGTVHLAASGETANGFTHVPARAEWSLSDDPAYVHLCTNETIHGVETFEIPDLGDIPLVADASSHILSRPMDIAKYGVLFGGAQKNIGMAGVTVVIVREDLLERSMSICPSAFEWKTVALNNSMYNTPPTYAIYIAGLVFKWLKKQGGLTAIEARNVEKAKLLYDTIDSSSFYLNKVERNARSRMNVPFFLADESRNEDFLAGAKARGLVQLKGHKSVGGMRASIYNAVPLEGVKALVEYMREFEQRGA.

Arginine 41 lines the L-glutamate pocket. The pyridoxal 5'-phosphate site is built by tryptophan 101, threonine 152, aspartate 172, and glutamine 195. Residue lysine 196 is modified to N6-(pyridoxal phosphate)lysine. Residue 237–238 participates in pyridoxal 5'-phosphate binding; it reads NT.

Belongs to the class-V pyridoxal-phosphate-dependent aminotransferase family. SerC subfamily. Homodimer. The cofactor is pyridoxal 5'-phosphate.

It is found in the cytoplasm. The enzyme catalyses O-phospho-L-serine + 2-oxoglutarate = 3-phosphooxypyruvate + L-glutamate. The catalysed reaction is 4-(phosphooxy)-L-threonine + 2-oxoglutarate = (R)-3-hydroxy-2-oxo-4-phosphooxybutanoate + L-glutamate. It functions in the pathway amino-acid biosynthesis; L-serine biosynthesis; L-serine from 3-phospho-D-glycerate: step 2/3. Its pathway is cofactor biosynthesis; pyridoxine 5'-phosphate biosynthesis; pyridoxine 5'-phosphate from D-erythrose 4-phosphate: step 3/5. Its function is as follows. Catalyzes the reversible conversion of 3-phosphohydroxypyruvate to phosphoserine and of 3-hydroxy-2-oxo-4-phosphonooxybutanoate to phosphohydroxythreonine. This is Phosphoserine aminotransferase from Paraburkholderia phymatum (strain DSM 17167 / CIP 108236 / LMG 21445 / STM815) (Burkholderia phymatum).